The primary structure comprises 334 residues: MKQAVYVASPDSQQIHVWQLDSAGELTLLQTVDVPGQVQPMAISPNQRHLYVGVRPDFGIVSYHIADDGTLTAAGMAPLPGSPTHIDTDRQGRFLFSASYSFNCVSISPIDTHGVVQAPIQQLDDLPAPHSANIDPTNQILLVPCLKEDKVRLFDLSAEGQLTPHAQADITVAAGAGPRHMAFHPNHQVAYCVNELNSSVDVYQISNNGQEYHLVQSLDAMPADFTGTRWAADIHITPNGRYLYISDRTANLLGIFTVSKDGRVISLVGHHLTEAQPRGFNIDHSGNFLIASGQKSDHIEVYRIDQNTGELTTLKRYPVGKGPMWVSIRGAQNS.

This sequence belongs to the cycloisomerase 2 family.

The enzyme catalyses 6-phospho-D-glucono-1,5-lactone + H2O = 6-phospho-D-gluconate + H(+). It participates in carbohydrate degradation; pentose phosphate pathway; D-ribulose 5-phosphate from D-glucose 6-phosphate (oxidative stage): step 2/3. Its function is as follows. Catalyzes the hydrolysis of 6-phosphogluconolactone to 6-phosphogluconate. The polypeptide is 6-phosphogluconolactonase (Yersinia pseudotuberculosis serotype IB (strain PB1/+)).